The sequence spans 262 residues: 5'-nucleotidase SurE (262 aa).

A divalent metal cation is bound by residues D11, D12, S43, and N101.

It belongs to the SurE nucleotidase family. The cofactor is a divalent metal cation.

It localises to the cytoplasm. The catalysed reaction is a ribonucleoside 5'-phosphate + H2O = a ribonucleoside + phosphate. Functionally, nucleotidase that shows phosphatase activity on nucleoside 5'-monophosphates. This is 5'-nucleotidase SurE from Prochlorococcus marinus (strain NATL1A).